A 69-amino-acid chain; its full sequence is Ribosome modulation factor (69 aa).

It belongs to the ribosome modulation factor family.

It localises to the cytoplasm. Functionally, during stationary phase, converts 70S ribosomes to an inactive dimeric form (100S ribosomes). The protein is Ribosome modulation factor of Hahella chejuensis (strain KCTC 2396).